We begin with the raw amino-acid sequence, 696 residues long: MARKTPIERYRNIGVMAHIDAGKTTTTERILFYTGVSHKLGEVHDGAATMDWMEQEQERGITITSAATTCFWKGMDHNYPDHRINIIDTPGHVDFTIEVERSLRVLDGACTVFCAVGGVQPQTETVWRQANKYKVPRLAFVNKMDRAGANFMRVYEQIQSRLKAHPVPIQLPIGAEDKFEGVVDLIKMKAIHWDDASQGMRFEERDIPANMVEDAKSWREKMVESAAEANEELMNKYLEEGDLSPADIKQGLRIRTLANEIVPMLCGSAFKNKGVQAMLDAVLDYLPSPADIEAIDGEKESGEHAERHASDEEPFAGLAFKIATDPYVGQLIFFRVYSGVVTSGDTVYNPIKGRKERIGRLLQMHANQREEIKEVRAGDIAAAVGLKEAVTGDTLCDPADVITLERMVFPEPVIHVAVEPKTKLDQEKMGIALNRLAQEDPSFRVRTDEESGQTIISGMGELHLEIIVDRMKREFGVEANVGAPQVAYREAIRKSVDVEGKFIKQSGGRGQYGHVWIKMEQNEAGKGFEFIDAIKGGTVPREYIPAVQKGLEETLPNGVLAGFPVVDVKVTLFDGSYHDVDSNENAFKMAASIAFKDGMRKANPVLLEPMMSVEVETPADFMGNVVGDLSSRRGMIQGMDDLPGLKVVRAEVPLAEMFGYATSLRSATQGRATYTMEFKHYAEAPKNVAEAIISKK.

A tr-type G domain is found at 8–290; that stretch reads ERYRNIGVMA…AVLDYLPSPA (283 aa). GTP contacts are provided by residues 17-24, 88-92, and 142-145; these read AHIDAGKT, DTPGH, and NKMD.

It belongs to the TRAFAC class translation factor GTPase superfamily. Classic translation factor GTPase family. EF-G/EF-2 subfamily.

Its subcellular location is the cytoplasm. Catalyzes the GTP-dependent ribosomal translocation step during translation elongation. During this step, the ribosome changes from the pre-translocational (PRE) to the post-translocational (POST) state as the newly formed A-site-bound peptidyl-tRNA and P-site-bound deacylated tRNA move to the P and E sites, respectively. Catalyzes the coordinated movement of the two tRNA molecules, the mRNA and conformational changes in the ribosome. The sequence is that of Elongation factor G from Nitrosospira multiformis (strain ATCC 25196 / NCIMB 11849 / C 71).